The chain runs to 121 residues: Small ribosomal subunit protein uS13 (121 aa).

Residues 97–121 (PVRGQKTHSNARTRKGPRASRIKKK) are disordered. A compositionally biased stretch (basic residues) spans 101–121 (QKTHSNARTRKGPRASRIKKK).

It belongs to the universal ribosomal protein uS13 family. In terms of assembly, part of the 30S ribosomal subunit. Forms a loose heterodimer with protein S19. Forms two bridges to the 50S subunit in the 70S ribosome.

In terms of biological role, located at the top of the head of the 30S subunit, it contacts several helices of the 16S rRNA. In the 70S ribosome it contacts the 23S rRNA (bridge B1a) and protein L5 of the 50S subunit (bridge B1b), connecting the 2 subunits; these bridges are implicated in subunit movement. Contacts the tRNAs in the A and P-sites. The protein is Small ribosomal subunit protein uS13 of Kosmotoga olearia (strain ATCC BAA-1733 / DSM 21960 / TBF 19.5.1).